The following is a 64-amino-acid chain: Large ribosomal subunit protein bL32 (64 aa).

Residues 1–35 are disordered; that stretch reads MAVQKSRVTPSRRGQRRSHDALTAKQLSTDPTSGE.

This sequence belongs to the bacterial ribosomal protein bL32 family.

In Xanthomonas campestris pv. campestris (strain 8004), this protein is Large ribosomal subunit protein bL32.